The following is a 426-amino-acid chain: Enolase (426 aa).

Gln-162 contacts (2R)-2-phosphoglycerate. Residue Glu-204 is the Proton donor of the active site. Positions 241, 284, and 311 each coordinate Mg(2+). (2R)-2-phosphoglycerate contacts are provided by Lys-336, Arg-365, Ser-366, and Lys-387. Lys-336 serves as the catalytic Proton acceptor.

Belongs to the enolase family. Component of the RNA degradosome, a multiprotein complex involved in RNA processing and mRNA degradation. The cofactor is Mg(2+).

Its subcellular location is the cytoplasm. It localises to the secreted. It is found in the cell surface. It carries out the reaction (2R)-2-phosphoglycerate = phosphoenolpyruvate + H2O. Its pathway is carbohydrate degradation; glycolysis; pyruvate from D-glyceraldehyde 3-phosphate: step 4/5. Functionally, catalyzes the reversible conversion of 2-phosphoglycerate (2-PG) into phosphoenolpyruvate (PEP). It is essential for the degradation of carbohydrates via glycolysis. In Hydrogenovibrio crunogenus (strain DSM 25203 / XCL-2) (Thiomicrospira crunogena), this protein is Enolase.